The following is a 481-amino-acid chain: 6-phosphogluconate dehydrogenase, decarboxylating (481 aa).

Residues G11 to G16, N34 to T36, V76 to A78, and N104 contribute to the NADP(+) site. Substrate contacts are provided by residues N104 and S130–G132. K184 functions as the Proton acceptor in the catalytic mechanism. A substrate-binding site is contributed by H187 to N188. Catalysis depends on E191, which acts as the Proton donor. Positions 192, 259, 286, 445, and 451 each coordinate substrate.

This sequence belongs to the 6-phosphogluconate dehydrogenase family. As to quaternary structure, homodimer.

It catalyses the reaction 6-phospho-D-gluconate + NADP(+) = D-ribulose 5-phosphate + CO2 + NADPH. It functions in the pathway carbohydrate degradation; pentose phosphate pathway; D-ribulose 5-phosphate from D-glucose 6-phosphate (oxidative stage): step 3/3. Catalyzes the oxidative decarboxylation of 6-phosphogluconate to ribulose 5-phosphate and CO(2), with concomitant reduction of NADP to NADPH. This Drosophila melanogaster (Fruit fly) protein is 6-phosphogluconate dehydrogenase, decarboxylating (Pgd).